The following is a 624-amino-acid chain: Chitin elicitor receptor kinase 1 (624 aa).

Positions 1-18 (MEASTSLLVLVLAAAAFA) are cleaved as a signal peptide. Residues 19 to 240 (AGTVTEAAGD…SPGKGASAGA (222 aa)) are Extracellular-facing. 3 disulfides stabilise this stretch: cysteine 30–cysteine 93, cysteine 34–cysteine 160, and cysteine 91–cysteine 158. Asparagine 48 is a glycosylation site (N-linked (GlcNAc...) asparagine). 115–121 (RGQIYTS) serves as a coordination point for chitin. A glycan (N-linked (GlcNAc...) asparagine) is linked at asparagine 128. 142 to 148 (PANNIPD) provides a ligand contact to chitin. Residues asparagine 153 and asparagine 157 are each glycosylated (N-linked (GlcNAc...) asparagine). Residues 173 to 218 (LTYPLRAEDTLASVAATYGLSSQLDVVRRYNPGMESATGSGIVYIP) form the LysM domain. Residue asparagine 223 is glycosylated (N-linked (GlcNAc...) asparagine). A helical membrane pass occupies residues 241–261 (IAGGVVAGVVVLAAIFLYIIF). Topologically, residues 262-624 (YRRRKAKQAT…QGLVNLMSGR (363 aa)) are cytoplasmic. The Protein kinase domain occupies 324–599 (FSIGNKIGQG…RSVVVALMTL (276 aa)). ATP contacts are provided by residues 330-338 (IGQGGFGAV) and lysine 351. Aspartate 443 acts as the Proton acceptor in catalysis.

Belongs to the protein kinase superfamily. Ser/Thr protein kinase family. Homooligomer. Interacts with CEBIP. Interacts with LYP4 and LYP6. Interacts with RLCK176. Post-translationally, autophosphorylated; induced by chitin and derivatives. As to expression, expressed in seedlings, roots, shoots and stems, and, to a lower extent, in flowers.

The protein resides in the cell membrane. The enzyme catalyses L-seryl-[protein] + ATP = O-phospho-L-seryl-[protein] + ADP + H(+). It catalyses the reaction L-threonyl-[protein] + ATP = O-phospho-L-threonyl-[protein] + ADP + H(+). Its function is as follows. Lysin motif (LysM) receptor kinase required as a cell surface receptor for chitin elicitor (chitooligosaccharides) signaling leading to innate immunity in response to biotic stresses. Involved in the resistance to pathogenic fungi, probably by sensing microbe-associated molecular patterns (MAMP) and pathogen-associated molecular patterns (PAMP). Involved in the detection of microbial peptidoglycans (PGNs) and mediates PGN response. Plays dual roles in PGN and chitin signaling during innate immunity. Acts as an adapter for LYP4 and LYP6 and mediates signal transduction from the extracellular to intracellular spaces. Participates in the activation of defense genes during response to PGN and chitin. Phosphorylates the downstream partner RLCK185 in response to chitin elicitation. The sequence is that of Chitin elicitor receptor kinase 1 from Oryza sativa subsp. japonica (Rice).